We begin with the raw amino-acid sequence, 481 residues long: tRNA-2-methylthio-N(6)-dimethylallyladenosine synthase (481 aa).

Residues K24–E140 enclose the MTTase N-terminal domain. C33, C69, C103, C178, C182, and C185 together coordinate [4Fe-4S] cluster. Residues M164–R411 form the Radical SAM core domain. Residues E413–G476 form the TRAM domain.

This sequence belongs to the methylthiotransferase family. MiaB subfamily. As to quaternary structure, monomer. It depends on [4Fe-4S] cluster as a cofactor.

The protein resides in the cytoplasm. The enzyme catalyses N(6)-dimethylallyladenosine(37) in tRNA + (sulfur carrier)-SH + AH2 + 2 S-adenosyl-L-methionine = 2-methylsulfanyl-N(6)-dimethylallyladenosine(37) in tRNA + (sulfur carrier)-H + 5'-deoxyadenosine + L-methionine + A + S-adenosyl-L-homocysteine + 2 H(+). Functionally, catalyzes the methylthiolation of N6-(dimethylallyl)adenosine (i(6)A), leading to the formation of 2-methylthio-N6-(dimethylallyl)adenosine (ms(2)i(6)A) at position 37 in tRNAs that read codons beginning with uridine. In Flavobacterium johnsoniae (strain ATCC 17061 / DSM 2064 / JCM 8514 / BCRC 14874 / CCUG 350202 / NBRC 14942 / NCIMB 11054 / UW101) (Cytophaga johnsonae), this protein is tRNA-2-methylthio-N(6)-dimethylallyladenosine synthase.